Here is a 542-residue protein sequence, read N- to C-terminus: Neurofilament light polypeptide (542 aa).

Position 2 is an N-acetylserine (Ser-2). The segment at 2–93 (SSFSYEPYFS…KSIRTQEKAQ (92 aa)) is head. Thr-21 carries O-linked (GlcNAc) threonine glycosylation. Residue Arg-23 is modified to Asymmetric dimethylarginine; alternate. Position 23 is an omega-N-methylarginine; alternate (Arg-23). An O-linked (GlcNAc) serine glycan is attached at Ser-27. Arg-30 carries the omega-N-methylarginine modification. Tyr-43 is modified (phosphotyrosine). Ser-56, Ser-67, and Ser-103 each carry phosphoserine. In terms of domain architecture, IF rod spans 90–401 (EKAQLQDLND…KLLEGEETRL (312 aa)). Positions 94–125 (LQDLNDRFASFIERVHELEQQNKVLEAELLVL) are coil 1A. The tract at residues 126–138 (RQKHSEPSRFRAL) is linker 1. The interval 139–234 (YEQEIRDLRL…KVHEEEIAEL (96 aa)) is coil 1B. Residues 235–253 (QAQIQYAQISVEMDVSSKP) form a linker 12 region. A coil 2A region spans residues 254–272 (DLSAALKDIRAQYEKLAAK). The segment at 273-281 (NMQNAEEWF) is linker 2. Residues 282–397 (KSRFTVLTES…AAYRKLLEGE (116 aa)) form a coil 2B region. Residues 382–392 (ALDIEIAAYRK) are epitope; recognized by IF-specific monoclonal antibody. Residues 398–444 (ETRLSFTSVGSITSGYSQSSQVFGRSAYSGLQSSSYLMSARAFPAYY) form a tail, subdomain A region. The tract at residues 398–542 (ETRLSFTSVG…GEEQAAKKKD (145 aa)) is tail. The tract at residues 445–542 (TSHVQEEQSE…GEEQAAKKKD (98 aa)) is tail, subdomain B (acidic). Residues 451 to 542 (EQSEVEETIE…GEEQAAKKKD (92 aa)) form a disordered region. Phosphoserine is present on Ser-453. Residues 460 to 471 (EATKAEEAKDEP) show a composition bias toward basic and acidic residues. Residues 472 to 527 (PSEGEAEEEEKEKEEGEEEEGAEEEEAAKDESEDAKEEEGGEGEEEDTKESEEEEK) are compositionally biased toward acidic residues. Ser-473 and Ser-503 each carry phosphoserine. Residue Thr-519 is modified to Phosphothreonine. Residues Ser-522 and Ser-531 each carry the phosphoserine modification. The segment covering 528–542 (KEESAGEEQAAKKKD) has biased composition (basic and acidic residues).

The protein belongs to the intermediate filament family. As to quaternary structure, forms homodimers (in vitro). Forms heterodimers with NEFH or NEFM; which can further hetero-oligomerize (in vitro). Forms heterodimers with INA (in vitro). Interacts with ARHGEF28. Interacts with TRIM2. O-glycosylated; contains three N-acetylglucosamine side chains. Post-translationally, phosphorylated in the head and rod regions by the PKC kinase PKN1, leading to the inhibition of polymerization. In terms of processing, ubiquitinated in the presence of TRIM2 and UBE2D1. In terms of tissue distribution, expressed in the dorsal root ganglion neurons (at protein level).

Its subcellular location is the cell projection. The protein localises to the axon. It is found in the cytoplasm. It localises to the cytoskeleton. Neurofilaments usually contain three intermediate filament proteins: NEFL, NEFM, and NEFH which are involved in the maintenance of neuronal caliber. May additionally cooperate with the neuronal intermediate filament proteins PRPH and INA to form neuronal filamentous networks. This chain is Neurofilament light polypeptide (Nefl), found in Rattus norvegicus (Rat).